We begin with the raw amino-acid sequence, 243 residues long: Pyridoxine 5'-phosphate synthase (243 aa).

Residue asparagine 9 coordinates 3-amino-2-oxopropyl phosphate. Residue 11 to 12 participates in 1-deoxy-D-xylulose 5-phosphate binding; that stretch reads DH. Arginine 20 lines the 3-amino-2-oxopropyl phosphate pocket. The active-site Proton acceptor is the histidine 45. 1-deoxy-D-xylulose 5-phosphate contacts are provided by arginine 47 and histidine 52. Residue glutamate 72 is the Proton acceptor of the active site. A 1-deoxy-D-xylulose 5-phosphate-binding site is contributed by threonine 102. Histidine 193 acts as the Proton donor in catalysis. 3-amino-2-oxopropyl phosphate is bound by residues glycine 194 and 215–216; that span reads GH.

Belongs to the PNP synthase family. Homooctamer; tetramer of dimers.

It localises to the cytoplasm. The enzyme catalyses 3-amino-2-oxopropyl phosphate + 1-deoxy-D-xylulose 5-phosphate = pyridoxine 5'-phosphate + phosphate + 2 H2O + H(+). It participates in cofactor biosynthesis; pyridoxine 5'-phosphate biosynthesis; pyridoxine 5'-phosphate from D-erythrose 4-phosphate: step 5/5. Its function is as follows. Catalyzes the complicated ring closure reaction between the two acyclic compounds 1-deoxy-D-xylulose-5-phosphate (DXP) and 3-amino-2-oxopropyl phosphate (1-amino-acetone-3-phosphate or AAP) to form pyridoxine 5'-phosphate (PNP) and inorganic phosphate. This Salmonella paratyphi A (strain ATCC 9150 / SARB42) protein is Pyridoxine 5'-phosphate synthase.